The following is a 284-amino-acid chain: Nucleotide-binding protein Pput_0988 (284 aa).

Residue 8-15 participates in ATP binding; that stretch reads GRSGSGKS. 60–63 contributes to the GTP binding site; sequence DARN.

Belongs to the RapZ-like family.

Functionally, displays ATPase and GTPase activities. The protein is Nucleotide-binding protein Pput_0988 of Pseudomonas putida (strain ATCC 700007 / DSM 6899 / JCM 31910 / BCRC 17059 / LMG 24140 / F1).